A 497-amino-acid chain; its full sequence is MFISRRCRIKGFTLKNLLWFRSSSTRFVSTESPDASAITKPDGIFNYSLLENRTYIRIRGPDTVKFLNGLVTSKLLPHFIKKNLTTVEENEVPTEEGTTKVDPIIPVPEFDARLGNWGLYNEKGIQGPYISRFGLYSAFLNGKGKLITDTIIYPTPVTVSEQISNYPEYLLELHGNVVDKILHVLQTHKLANKIKFEKIDHSSLKTWDVEVQFPNLPKDIENPWFDNLLDPMALPKNSIDANNFAVNVLNSLFNSDPRILGIYVERRTESMSRHYSTFPQSFRVVTSEQVDDLSKLFNFNVFDFPFQVNKKASVQVREIRFQKGLIDSTEDYISETLLPLELNFDFFPNTISTNKGCYVGQELTARTYATGILRKRLVPVKLDNYQLLDTDPERKYAEFHIDNVVEKSLAENEPTLNPFTNKPPERTKRKQRPAGLLISNEGLYGVALLRTEHFSAAFSSDEPVEFYITTTKGENIKITPQKPFWFSDWKNNNGPHK.

The N-terminal 27 residues, 1-27 (MFISRRCRIKGFTLKNLLWFRSSSTRF), are a transit peptide targeting the mitochondrion. The interval 414–433 (PTLNPFTNKPPERTKRKQRP) is disordered.

The protein belongs to the GcvT family. CAF17/IBA57 subfamily. As to quaternary structure, interacts with CCR4, ISA1 and ISA2.

It localises to the mitochondrion matrix. Required for lysine and glutamate prototrophy and mitochondrial genome maintenance. Has a role in the maturation of mitochondrial aconitase-type and radical-SAM Fe/S proteins biotin synthase and lipoic acid synthase. In Saccharomyces cerevisiae (strain ATCC 204508 / S288c) (Baker's yeast), this protein is Iron-sulfur cluster assembly factor IBA57, mitochondrial.